Here is a 128-residue protein sequence, read N- to C-terminus: MQKLLLALIVGLGGFLGASLRYLISIFAAKNFGGNFPYGTLIANILGALLIGFIMEFSMDSALISSNMKLFLTTGIMGGLTTFSTFSYETISMLTNGNITLGIENIILNLGCSLLFVVIGQKLARILF.

The next 4 membrane-spanning stretches (helical) occupy residues 4–24, 39–59, 71–91, and 99–119; these read LLLA…RYLI, GTLI…EFSM, FLTT…YETI, and ITLG…FVVI. Na(+) contacts are provided by Gly-78 and Thr-81.

It belongs to the fluoride channel Fluc/FEX (TC 1.A.43) family.

The protein localises to the cell membrane. It carries out the reaction fluoride(in) = fluoride(out). Its activity is regulated as follows. Na(+) is not transported, but it plays an essential structural role and its presence is essential for fluoride channel function. Fluoride-specific ion channel. Important for reducing fluoride concentration in the cell, thus reducing its toxicity. The sequence is that of Fluoride-specific ion channel FluC from Clostridium perfringens (strain ATCC 13124 / DSM 756 / JCM 1290 / NCIMB 6125 / NCTC 8237 / Type A).